The chain runs to 666 residues: Peptidase S41 family protein phomP1 (666 aa).

Residues 1–27 (MSSFLVQTAVVRLFLLGVVFWFPFALS) form the signal peptide. N-linked (GlcNAc...) asparagine glycosylation is found at N70, N214, and N234. Residues 303 to 504 (DVAVLQITSF…LLQAQGVRTV (202 aa)) are peptidase S41 domain. N-linked (GlcNAc...) asparagine glycosylation is found at N555 and N612.

Belongs to the peptidase S41A family.

Its pathway is mycotoxin biosynthesis. In terms of biological role, peptidase S41 family protein; part of the gene cluster that mediates the biosynthesis of the phomopsins, a group of hexapeptide mycotoxins which infects lupins and causes lupinosis disease in livestock. Within the pathway, phomP1 and phomP1' are probably involved in the processing of the phomA and phomA' precursors. The pathway starts with the processing of the precursor phomA by several endopeptidases including kexin proteases as well as the cluster-specific S41 family peptidase phomP1 and the oligopeptidase phomG to produce 10 identical copies of the hexapeptide Tyr-Val-Ile-Pro-Ile-Asp. After being excised from the precursor peptide, the core peptides are cyclized and modified post-translationally by enzymes encoded within the gene cluster. The timing and order of proteolysis of the phomA precursor and PTMs are still unknown. Two tyrosinase-like enzymes, phomQ1 and phomQ2, catalyze the chlorination and hydroxylation of Tyr, respectively. PhomYb, is proposed to be involved in the construction of the macrocyclic structure. The other 4 ustYa family proteins may be involved in PTMs that generate the unique structure of phomopsin A. PhomYa is required for the hydroxylation of C-beta of Tyr. PhomYc, phomYd, and phomYe are responsible for the biosynthesis of 2,3-dehydroisoleucine (dIle), 2,3-dehydroaspartic acid (dAsp), and 3,4-dehydroproline (dPro), respectively. While dIle formation by phomYc is indispensable for the installation of dAsp by phomYd, the order of the other PTMs have not been elucidated yet. Most of the biosynthetic enzymes likely have broad substrate specificity, and thus, there might be a metabolic grid from a precursor to phomopsin A. The enzyme(s) responsible for the biosynthesis of 3,4-dehydrovaline (dVal) have also not been identified yet. Finally, phomM acts as an S-adenosylmethionine-dependent alpha-N-methyltransferase that catalyzes two successive N-methylation reactions, converting N-desmethyl-phomopsin A to phomopsin A and phomopsin A further to an N,N-dimethylated congener called phomopsin E. This is Peptidase S41 family protein phomP1 from Diaporthe leptostromiformis (Lupinosis disease fungus).